Consider the following 344-residue polypeptide: Cyclin-G2 (344 aa).

The segment covering 301 to 313 (ESESEDSCEDMSC) has biased composition (acidic residues). The disordered stretch occupies residues 301–320 (ESESEDSCEDMSCGEESLSS).

The protein belongs to the cyclin family. Cyclin G subfamily. High levels in cerebellum, thymus, spleen and prostate. Low levels in skeletal muscle.

It is found in the cytoplasm. Functionally, may play a role in growth regulation and in negative regulation of cell cycle progression. The chain is Cyclin-G2 (CCNG2) from Homo sapiens (Human).